The chain runs to 285 residues: Mediator of RNA polymerase II transcription subunit 4 (285 aa).

The span at 1 to 13 (MSTPGPVPSSTSV) shows a compositional bias: low complexity. The segment at 1–25 (MSTPGPVPSSTSVATLPFSAQDKTQ) is disordered. Positions 31–115 (ELQSVGIYQD…TREILETLNT (85 aa)) form a coiled coil. Residues 206 to 285 (DNVNNDNNTS…DLDLFNPDEF (80 aa)) form a disordered region. 2 stretches are compositionally biased toward basic and acidic residues: residues 216–250 (KIDE…RRGS) and 257–267 (GKEDSETKSEE). Over residues 268–285 (NPDLELDLDLDLFNPDEF) the composition is skewed to acidic residues.

The protein belongs to the Mediator complex subunit 4 family. Component of the Mediator complex.

The protein resides in the nucleus. Its function is as follows. Component of the Mediator complex, a coactivator involved in the regulated transcription of nearly all RNA polymerase II-dependent genes. Mediator functions as a bridge to convey information from gene-specific regulatory proteins to the basal RNA polymerase II transcription machinery. Mediator is recruited to promoters by direct interactions with regulatory proteins and serves as a scaffold for the assembly of a functional preinitiation complex with RNA polymerase II and the general transcription factors. The polypeptide is Mediator of RNA polymerase II transcription subunit 4 (MED4) (Kluyveromyces lactis (strain ATCC 8585 / CBS 2359 / DSM 70799 / NBRC 1267 / NRRL Y-1140 / WM37) (Yeast)).